Here is a 399-residue protein sequence, read N- to C-terminus: Coenzyme A biosynthesis bifunctional protein CoaBC (399 aa).

The interval Met1–Ser190 is phosphopantothenoylcysteine decarboxylase. Cys159 serves as the catalytic Proton donor. The segment at Ile191–Met399 is phosphopantothenate--cysteine ligase. CTP is bound by residues Asp279, Lys289, Pro307 to Val310, Phe326, Lys340, and Lys344.

In the N-terminal section; belongs to the HFCD (homo-oligomeric flavin containing Cys decarboxylase) superfamily. The protein in the C-terminal section; belongs to the PPC synthetase family. The cofactor is Mg(2+). Requires FMN as cofactor.

The catalysed reaction is N-[(R)-4-phosphopantothenoyl]-L-cysteine + H(+) = (R)-4'-phosphopantetheine + CO2. The enzyme catalyses (R)-4'-phosphopantothenate + L-cysteine + CTP = N-[(R)-4-phosphopantothenoyl]-L-cysteine + CMP + diphosphate + H(+). It participates in cofactor biosynthesis; coenzyme A biosynthesis; CoA from (R)-pantothenate: step 2/5. The protein operates within cofactor biosynthesis; coenzyme A biosynthesis; CoA from (R)-pantothenate: step 3/5. Catalyzes two sequential steps in the biosynthesis of coenzyme A. In the first step cysteine is conjugated to 4'-phosphopantothenate to form 4-phosphopantothenoylcysteine. In the second step the latter compound is decarboxylated to form 4'-phosphopantotheine. The protein is Coenzyme A biosynthesis bifunctional protein CoaBC of Vibrio parahaemolyticus serotype O3:K6 (strain RIMD 2210633).